The chain runs to 290 residues: Endonuclease 2 (290 aa).

Residues 1 to 27 form the signal peptide; it reads MANQKGLHVVMMIITVWLLYAAPNIHG. The a divalent metal cation site is built by Trp28 and His33. 28 to 33 lines the substrate pocket; the sequence is WGKEGH. An intrachain disulfide couples Cys37 to Cys68. A divalent metal cation is bound by residues Asp72 and His85. Substrate contacts are provided by residues 72–76, 85–88, and 94–99; these read DRVKF, HYIN, and SYQYNR. 3 disulfides stabilise this stretch: Cys93/Cys245, Cys101/Cys111, and Cys226/Cys232. Residues Asn118 and Tyr136 each coordinate substrate. Residue Asn118 is glycosylated (N-linked (GlcNAc...) asparagine). N-linked (GlcNAc...) asparagine glycosylation is present at Asn137. Residues His147, Asp151, His157, His181, and Asp185 each contribute to the a divalent metal cation site. The substrate binding stretch occupies residues 147 to 196; the sequence is HFMGDIHQPLHVSYASDKGGNTIEVHWYTRKANLHHIWDSNIIETAEADL. N-linked (GlcNAc...) asparagine glycosylation is present at Asn211. Positions 283 to 290 are cleaved as a propeptide — removed in mature form; that stretch reads ATLNRIFG.

This sequence belongs to the nuclease type I family. As to quaternary structure, monomer. The cofactor is Mn(2+). It depends on Ca(2+) as a cofactor. Zn(2+) serves as cofactor. In terms of processing, N-glycosylation is required for enzymatic stability and activity.

The catalysed reaction is Endonucleolytic cleavage to 5'-phosphomononucleotide and 5'-phosphooligonucleotide end-products.. SsDNase activity is inhibited by the divalent cation chelator EDTA and the reducing agent DTT. Divalent metal ions (e.g. Ca(2+), Mg(2+) and Zn(2+)) and DTT represses RNase activity. RNase activity is enhanced by EDTA. Also repressed by vanadate (VO(4)(3-)) and phosphate (PO(4)(3-)) by occupying the active site. Functionally, endonuclease mostly active on RNA and ssDNA, and to a lower extent, on dsDNA. Can cleave mismatch regions in heteroduplex DNA containing single base pair mismatches or insertion/deletion bases. In contradiction with PubMed:22506810, cannot hydrolyze single-stranded DNA and does not cleave mismatches. The sequence is that of Endonuclease 2 from Arabidopsis thaliana (Mouse-ear cress).